We begin with the raw amino-acid sequence, 229 residues long: DNA repair protein RecO (229 aa).

It belongs to the RecO family.

In terms of biological role, involved in DNA repair and RecF pathway recombination. This Legionella pneumophila (strain Paris) protein is DNA repair protein RecO.